A 173-amino-acid chain; its full sequence is Alpha-crystallin A chain (173 aa).

Met-1 is modified (N-acetylmethionine). The required for complex formation with BFSP1 and BFSP2 stretch occupies residues 1-63; the sequence is MDVTIQHPWF…RTVLDSGISE (63 aa). Position 6 is a deamidated glutamine; partial (Gln-6). Residue Ser-45 is modified to Phosphoserine. Gln-50 carries the post-translational modification Deamidated glutamine; partial. Residues 52–162 form the sHSP domain; that stretch reads LFRTVLDSGI…GHSERAIPVS (111 aa). Lys-70 is subject to N6-acetyllysine. Deamidated glutamine; partial is present on Gln-90. Lys-99 is subject to N6-acetyllysine. Zn(2+)-binding residues include His-100, Glu-102, and His-107. A Phosphoserine modification is found at Ser-122. Asn-123 carries the post-translational modification Deamidated asparagine; partial. Positions 145–173 are disordered; that stretch reads KVQSGLDAGHSERAIPVSREEKPSSAPSS. The residue at position 147 (Gln-147) is a Deamidated glutamine; partial. Positions 153-167 are enriched in basic and acidic residues; sequence GHSERAIPVSREEKP. Position 154 (His-154) interacts with Zn(2+). O-linked (GlcNAc) serine glycosylation occurs at Ser-162.

This sequence belongs to the small heat shock protein (HSP20) family. As to quaternary structure, heteromer composed of three CRYAA and one CRYAB subunits. Inter-subunit bridging via zinc ions enhances stability, which is crucial as there is no protein turn over in the lens. Can also form homodimers and homotetramers (dimers of dimers) which serve as the building blocks of homooligomers. Within homooligomers, the zinc-binding motif is created from residues of 3 different molecules. His-100 and Glu-102 from one molecule are ligands of the zinc ion, and His-107 and His-154 residues from additional molecules complete the site with tetrahedral coordination geometry. Part of a complex required for lens intermediate filament formation composed of BFSP1, BFSP2 and CRYAA. In terms of processing, acetylation at Lys-70 may increase chaperone activity. Undergoes age-dependent proteolytical cleavage at the C-terminus.

Its subcellular location is the cytoplasm. It is found in the nucleus. Its function is as follows. Contributes to the transparency and refractive index of the lens. Acts as a chaperone, preventing aggregation of various proteins under a wide range of stress conditions. Required for the correct formation of lens intermediate filaments as part of a complex composed of BFSP1, BFSP2 and CRYAA. The sequence is that of Alpha-crystallin A chain (CRYAA) from Ochotona princeps (Southern American pika).